Reading from the N-terminus, the 613-residue chain is Dihydroxy-acid dehydratase (613 aa).

A Mg(2+)-binding site is contributed by Asp81. Cys122 contacts [2Fe-2S] cluster. Residues Asp123 and Lys124 each coordinate Mg(2+). Lys124 is modified (N6-carboxylysine). Cys197 serves as a coordination point for [2Fe-2S] cluster. Glu493 contributes to the Mg(2+) binding site. The active-site Proton acceptor is the Ser519.

The protein belongs to the IlvD/Edd family. Homodimer. The cofactor is [2Fe-2S] cluster. It depends on Mg(2+) as a cofactor.

The enzyme catalyses (2R)-2,3-dihydroxy-3-methylbutanoate = 3-methyl-2-oxobutanoate + H2O. The catalysed reaction is (2R,3R)-2,3-dihydroxy-3-methylpentanoate = (S)-3-methyl-2-oxopentanoate + H2O. The protein operates within amino-acid biosynthesis; L-isoleucine biosynthesis; L-isoleucine from 2-oxobutanoate: step 3/4. Its pathway is amino-acid biosynthesis; L-valine biosynthesis; L-valine from pyruvate: step 3/4. In terms of biological role, functions in the biosynthesis of branched-chain amino acids. Catalyzes the dehydration of (2R,3R)-2,3-dihydroxy-3-methylpentanoate (2,3-dihydroxy-3-methylvalerate) into 2-oxo-3-methylpentanoate (2-oxo-3-methylvalerate) and of (2R)-2,3-dihydroxy-3-methylbutanoate (2,3-dihydroxyisovalerate) into 2-oxo-3-methylbutanoate (2-oxoisovalerate), the penultimate precursor to L-isoleucine and L-valine, respectively. In Corynebacterium glutamicum (strain R), this protein is Dihydroxy-acid dehydratase.